The chain runs to 690 residues: Glutaminase A (690 aa).

A signal peptide spans 1–20 (MMHFLSFCLSVASLVSYAGA). N80, N96, N435, N508, N528, N538, and N571 each carry an N-linked (GlcNAc...) asparagine glycan.

Belongs to the fungal glutaminase gtaA family.

It is found in the secreted. It carries out the reaction L-glutamine + H2O = L-glutamate + NH4(+). Its activity is regulated as follows. Activity is inhibited by about 80% in the presence of 18% sodium chloride. In terms of biological role, glutaminase catalyzes the hydrolysis of glutamine to glutamic acid and plays a key role in nitrogen metabolism. Catalyzes the hydrolysis not only of L-glutamine but also of D-glutamine. This chain is Glutaminase A, found in Aspergillus oryzae (strain ATCC 42149 / RIB 40) (Yellow koji mold).